Here is a 345-residue protein sequence, read N- to C-terminus: S-adenosylmethionine:tRNA ribosyltransferase-isomerase (345 aa).

It belongs to the QueA family. In terms of assembly, monomer.

The protein resides in the cytoplasm. The catalysed reaction is 7-aminomethyl-7-carbaguanosine(34) in tRNA + S-adenosyl-L-methionine = epoxyqueuosine(34) in tRNA + adenine + L-methionine + 2 H(+). It participates in tRNA modification; tRNA-queuosine biosynthesis. In terms of biological role, transfers and isomerizes the ribose moiety from AdoMet to the 7-aminomethyl group of 7-deazaguanine (preQ1-tRNA) to give epoxyqueuosine (oQ-tRNA). The polypeptide is S-adenosylmethionine:tRNA ribosyltransferase-isomerase (Shewanella amazonensis (strain ATCC BAA-1098 / SB2B)).